The primary structure comprises 416 residues: Glutamyl-tRNA reductase (416 aa).

Residues 49–52, Ser-105, 110–112, and Gln-116 each bind substrate; these read TCNR and EPQ. Cys-50 acts as the Nucleophile in catalysis. Position 185 to 190 (185 to 190) interacts with NADP(+); sequence GAGETI.

Belongs to the glutamyl-tRNA reductase family. As to quaternary structure, homodimer.

It carries out the reaction (S)-4-amino-5-oxopentanoate + tRNA(Glu) + NADP(+) = L-glutamyl-tRNA(Glu) + NADPH + H(+). It functions in the pathway porphyrin-containing compound metabolism; protoporphyrin-IX biosynthesis; 5-aminolevulinate from L-glutamyl-tRNA(Glu): step 1/2. Its function is as follows. Catalyzes the NADPH-dependent reduction of glutamyl-tRNA(Glu) to glutamate 1-semialdehyde (GSA). This chain is Glutamyl-tRNA reductase, found in Shewanella amazonensis (strain ATCC BAA-1098 / SB2B).